An 87-amino-acid chain; its full sequence is Type 3 secretion system needle filament protein (87 aa).

This sequence belongs to the SctF family. In terms of assembly, the core secretion machinery of the T3SS is composed of approximately 20 different proteins, including cytoplasmic components, a base, an export apparatus and a needle. This subunit polymerizes and forms the helical needle filament. Forms high-order oligomers in vitro. Forms a stable ternary complex with the YscE-YscG chaperone. Interacts directly with YscG but makes very little direct contact with YscE. Interacts with the needle adapter protein YscI/SctI.

The protein resides in the secreted. The protein localises to the cell surface. The secretion and/or polymerization may be controlled by the type III secretion system regulator YopR. Interaction with YscE-YscG chaperone prevents premature polymerization of YscF/SctF in the bacterial cytosol and is required for its stability and efficient secretion. Interaction with the needle adapter protein YscI/SctI is required for YscF/SctF secretion, needle assembly and Yop secretion. The N-terminus varies among bacterial species, not only in amino acid composition but also in the number of amino acids, and may function in manipulating the host response to the advantage of the bacteria. In Y.pestis, the N-terminus can function to decrease cytokine induction, perhaps contributing to a favorable immune environment leading to survival of Y.pestis within the eukaryotic host. Functionally, component of the type III secretion system (T3SS), also called injectisome, which is used to inject bacterial effector proteins into eukaryotic host cells. YscF/SctF forms the external needle filament that protrudes from the bacterial surface. Essential for the calcium-dependent regulation of T3SS and Yop secretion. Required to block Yop secretion in the presence of extracellular calcium. May be the extracellular T3SS component that senses extracellular calcium and/or participates in transmitting the calcium signal to the cytoplasmic compartment where the block in secretion is initiated. In terms of biological role, during infection, can induce innate immune responses. The needle proteins interact with host TLR2 or TLR4, and induce signaling by NF-kappa-B and/or AP-1. This activation is MyD88 dependent and results in increased expression of cytokines, including TNF-alpha, IL-6 and IL-8. Innate immune responses are modulated by the N-terminal region of YscF/SctF. In Yersinia pestis, this protein is Type 3 secretion system needle filament protein.